The primary structure comprises 165 residues: UPF0114 protein in repA1-repA2 intergenic region (165 aa).

A run of 3 helical transmembrane segments spans residues 10–32 (YASR…LLTL), 53–75 (LILI…MVMF), and 136–155 (IMWC…GMAC).

It belongs to the UPF0114 family.

The protein resides in the cell membrane. In Buchnera aphidicola subsp. Geoica urticularia, this protein is UPF0114 protein in repA1-repA2 intergenic region.